The following is a 1068-amino-acid chain: Focal adhesion kinase 1 (1068 aa).

The tract at residues 1–26 (MAAAYLDPNLNHNPSTNAKSRLSTGM) is disordered. Residues 10–23 (LNHNPSTNAKSRLS) are compositionally biased toward polar residues. The region spanning 35 to 355 (RVLRVFHYFE…GYCRLVSGAS (321 aa)) is the FERM domain. Phosphotyrosine is present on residues tyrosine 403 and tyrosine 413. Positions 435 to 693 (IELGRCIGEG…ELKAQLSTIL (259 aa)) constitute a Protein kinase domain. ATP contacts are provided by residues 441-447 (IGEGQFG), lysine 467, and 513-515 (ELC). Aspartate 559 functions as the Proton acceptor in the catalytic mechanism. 2 positions are modified to phosphotyrosine; by autocatalysis: tyrosine 589 and tyrosine 590. A compositionally biased stretch (basic and acidic residues) spans 699-710 (QQEERMRMESRR). Disordered stretches follow at residues 699 to 750 (QQEE…QHMM) and 869 to 912 (GNQH…DGYN). 2 positions are modified to phosphotyrosine: tyrosine 874 and tyrosine 941.

It belongs to the protein kinase superfamily. Tyr protein kinase family. FAK subfamily. Phosphorylated on tyrosine residues; phosphorylated kinase is first detected during gastrulation, suggesting that tyrosine phosphorylation is developmentally regulated.

It is found in the cell junction. The protein localises to the focal adhesion. The protein resides in the cell membrane. Its subcellular location is the cytoplasm. It localises to the cytoskeleton. It is found in the cilium basal body. It carries out the reaction L-tyrosyl-[protein] + ATP = O-phospho-L-tyrosyl-[protein] + ADP + H(+). In terms of biological role, non-receptor protein-tyrosine kinase implicated in signaling pathways involved in cell motility, proliferation and apoptosis. Activated by tyrosine-phosphorylation in response to either integrin clustering induced by cell adhesion or antibody cross-linking, or via G-protein coupled receptor (GPCR) occupancy by ligands such as bombesin or lysophosphatidic acid, or via LDL receptor occupancy. Microtubule-induced dephosphorylation at Tyr-397 is crucial for the induction of focal adhesion disassembly. This Xenopus laevis (African clawed frog) protein is Focal adhesion kinase 1 (ptk2).